We begin with the raw amino-acid sequence, 230 residues long: NADH dehydrogenase [ubiquinone] iron-sulfur protein 8, mitochondrial (230 aa).

The transit peptide at methionine 1–phenylalanine 42 directs the protein to the mitochondrion. 2 consecutive 4Fe-4S ferredoxin-type domains span residues arginine 122–glutamate 151 and threonine 161–asparagine 190. [4Fe-4S] cluster-binding residues include cysteine 131, cysteine 134, cysteine 137, cysteine 141, cysteine 170, cysteine 173, cysteine 176, and cysteine 180.

This sequence belongs to the complex I 23 kDa subunit family. As to quaternary structure, complex I is composed of about 45 different subunits. This is a component of the iron-sulfur (IP) fragment of the enzyme. [4Fe-4S] cluster serves as cofactor.

The protein localises to the mitochondrion. It catalyses the reaction a ubiquinone + NADH + 5 H(+)(in) = a ubiquinol + NAD(+) + 4 H(+)(out). Core subunit of the mitochondrial membrane respiratory chain NADH dehydrogenase (Complex I) that is believed to belong to the minimal assembly required for catalysis. Complex I functions in the transfer of electrons from NADH to the respiratory chain. The immediate electron acceptor for the enzyme is believed to be ubiquinone. May donate electrons to ubiquinone. In Nicotiana tabacum (Common tobacco), this protein is NADH dehydrogenase [ubiquinone] iron-sulfur protein 8, mitochondrial.